A 37-amino-acid polypeptide reads, in one-letter code: Large ribosomal subunit protein bL36c (37 aa).

This sequence belongs to the bacterial ribosomal protein bL36 family.

Its subcellular location is the plastid. The polypeptide is Large ribosomal subunit protein bL36c (Cuscuta exaltata (Tall dodder)).